Here is a 340-residue protein sequence, read N- to C-terminus: Ketol-acid reductoisomerase (NADP(+)) (340 aa).

A KARI N-terminal Rossmann domain is found at 1–182; sequence MRVYYDRDCD…GGGRSGIIET (182 aa). NADP(+) is bound by residues 24 to 27, Arg48, Ser51, Ser53, and 83 to 86; these read YGSQ and DELQ. His108 is an active-site residue. Gly134 provides a ligand contact to NADP(+). Positions 183–329 constitute a KARI C-terminal knotted domain; that stretch reads NFREECETDL…KELRGMMPWI (147 aa). The Mg(2+) site is built by Asp191, Glu195, Glu227, and Glu231. Ser252 contacts substrate.

Belongs to the ketol-acid reductoisomerase family. It depends on Mg(2+) as a cofactor.

It carries out the reaction (2R)-2,3-dihydroxy-3-methylbutanoate + NADP(+) = (2S)-2-acetolactate + NADPH + H(+). The enzyme catalyses (2R,3R)-2,3-dihydroxy-3-methylpentanoate + NADP(+) = (S)-2-ethyl-2-hydroxy-3-oxobutanoate + NADPH + H(+). The protein operates within amino-acid biosynthesis; L-isoleucine biosynthesis; L-isoleucine from 2-oxobutanoate: step 2/4. Its pathway is amino-acid biosynthesis; L-valine biosynthesis; L-valine from pyruvate: step 2/4. Functionally, involved in the biosynthesis of branched-chain amino acids (BCAA). Catalyzes an alkyl-migration followed by a ketol-acid reduction of (S)-2-acetolactate (S2AL) to yield (R)-2,3-dihydroxy-isovalerate. In the isomerase reaction, S2AL is rearranged via a Mg-dependent methyl migration to produce 3-hydroxy-3-methyl-2-ketobutyrate (HMKB). In the reductase reaction, this 2-ketoacid undergoes a metal-dependent reduction by NADPH to yield (R)-2,3-dihydroxy-isovalerate. This Dinoroseobacter shibae (strain DSM 16493 / NCIMB 14021 / DFL 12) protein is Ketol-acid reductoisomerase (NADP(+)).